Consider the following 77-residue polypeptide: Protein AC145 (77 aa).

It localises to the host nucleus. It is found in the virion. In terms of biological role, plays a role in primary oral infection of the host. The sequence is that of Protein AC145 from Autographa californica nuclear polyhedrosis virus (AcMNPV).